Here is a 281-residue protein sequence, read N- to C-terminus: Large ribosomal subunit protein uL2 (281 aa).

Positions 223-255 (TVRGSVMNPNDHPHGGGEGRAPIGRKSPVTPWG) are disordered.

The protein belongs to the universal ribosomal protein uL2 family. As to quaternary structure, part of the 50S ribosomal subunit. Forms a bridge to the 30S subunit in the 70S ribosome.

One of the primary rRNA binding proteins. Required for association of the 30S and 50S subunits to form the 70S ribosome, for tRNA binding and peptide bond formation. It has been suggested to have peptidyltransferase activity; this is somewhat controversial. Makes several contacts with the 16S rRNA in the 70S ribosome. This Mycoplasma capricolum subsp. capricolum (strain California kid / ATCC 27343 / NCTC 10154) protein is Large ribosomal subunit protein uL2.